The chain runs to 609 residues: tRNA 5-methylaminomethyl-2-thiouridine biosynthesis bifunctional protein MnmC (609 aa).

Residues 1–229 (MVELAAATCL…TRNTLPARAM (229 aa)) form a tRNA (mnm(5)s(2)U34)-methyltransferase region. Residues 237–609 (IGAGLAGASV…SPELPVSCAP (373 aa)) are FAD-dependent cmnm(5)s(2)U34 oxidoreductase.

In the N-terminal section; belongs to the methyltransferase superfamily. tRNA (mnm(5)s(2)U34)-methyltransferase family. It in the C-terminal section; belongs to the DAO family. FAD serves as cofactor.

The protein localises to the cytoplasm. The enzyme catalyses 5-aminomethyl-2-thiouridine(34) in tRNA + S-adenosyl-L-methionine = 5-methylaminomethyl-2-thiouridine(34) in tRNA + S-adenosyl-L-homocysteine + H(+). Functionally, catalyzes the last two steps in the biosynthesis of 5-methylaminomethyl-2-thiouridine (mnm(5)s(2)U) at the wobble position (U34) in tRNA. Catalyzes the FAD-dependent demodification of cmnm(5)s(2)U34 to nm(5)s(2)U34, followed by the transfer of a methyl group from S-adenosyl-L-methionine to nm(5)s(2)U34, to form mnm(5)s(2)U34. The sequence is that of tRNA 5-methylaminomethyl-2-thiouridine biosynthesis bifunctional protein MnmC (mnmC) from Albidiferax ferrireducens (strain ATCC BAA-621 / DSM 15236 / T118) (Rhodoferax ferrireducens).